We begin with the raw amino-acid sequence, 298 residues long: Zinc import ATP-binding protein ZnuC (298 aa).

One can recognise an ABC transporter domain in the interval 17–232 (IELRNAGVYR…PEYVRLFGSR (216 aa)). ATP is bound at residue 49 to 56 (GPNGAGKS). The segment at 273-298 (RGHCHVEDGHHHDHEHHHHEGGQPRA) is disordered. The segment covering 276 to 298 (CHVEDGHHHDHEHHHHEGGQPRA) has biased composition (basic and acidic residues).

This sequence belongs to the ABC transporter superfamily. Zinc importer (TC 3.A.1.15.5) family. The complex is composed of two ATP-binding proteins (ZnuC), two transmembrane proteins (ZnuB) and a solute-binding protein (ZnuA).

The protein localises to the cell inner membrane. The enzyme catalyses Zn(2+)(out) + ATP(in) + H2O(in) = Zn(2+)(in) + ADP(in) + phosphate(in) + H(+)(in). Part of the ABC transporter complex ZnuABC involved in zinc import. Responsible for energy coupling to the transport system. This Brucella suis biovar 1 (strain 1330) protein is Zinc import ATP-binding protein ZnuC.